The chain runs to 197 residues: Small ribosomal subunit protein uS7 (197 aa).

The protein belongs to the universal ribosomal protein uS7 family. As to quaternary structure, part of the 30S ribosomal subunit.

In terms of biological role, one of the primary rRNA binding proteins, it binds directly to 16S rRNA where it nucleates assembly of the head domain of the 30S subunit. Is located at the subunit interface close to the decoding center. This chain is Small ribosomal subunit protein uS7, found in Methanopyrus kandleri (strain AV19 / DSM 6324 / JCM 9639 / NBRC 100938).